Here is a 594-residue protein sequence, read N- to C-terminus: UvrABC system protein C (594 aa).

The region spanning Asp14–Ile91 is the GIY-YIG domain. A UVR domain is found at Lys196 to Ile231.

The protein belongs to the UvrC family. Interacts with UvrB in an incision complex.

It localises to the cytoplasm. Its function is as follows. The UvrABC repair system catalyzes the recognition and processing of DNA lesions. UvrC both incises the 5' and 3' sides of the lesion. The N-terminal half is responsible for the 3' incision and the C-terminal half is responsible for the 5' incision. In Bacillus cereus (strain B4264), this protein is UvrABC system protein C.